The chain runs to 497 residues: Probable cytosol aminopeptidase (497 aa).

Mn(2+) contacts are provided by Lys263 and Asp268. Residue Lys275 is part of the active site. Mn(2+) is bound by residues Asp286, Asp345, and Glu347. The active site involves Arg349.

It belongs to the peptidase M17 family. Mn(2+) serves as cofactor.

It localises to the cytoplasm. The enzyme catalyses Release of an N-terminal amino acid, Xaa-|-Yaa-, in which Xaa is preferably Leu, but may be other amino acids including Pro although not Arg or Lys, and Yaa may be Pro. Amino acid amides and methyl esters are also readily hydrolyzed, but rates on arylamides are exceedingly low.. The catalysed reaction is Release of an N-terminal amino acid, preferentially leucine, but not glutamic or aspartic acids.. In terms of biological role, presumably involved in the processing and regular turnover of intracellular proteins. Catalyzes the removal of unsubstituted N-terminal amino acids from various peptides. This Methylorubrum populi (strain ATCC BAA-705 / NCIMB 13946 / BJ001) (Methylobacterium populi) protein is Probable cytosol aminopeptidase.